Reading from the N-terminus, the 200-residue chain is Imidazoleglycerol-phosphate dehydratase (200 aa).

This sequence belongs to the imidazoleglycerol-phosphate dehydratase family.

It is found in the cytoplasm. The enzyme catalyses D-erythro-1-(imidazol-4-yl)glycerol 3-phosphate = 3-(imidazol-4-yl)-2-oxopropyl phosphate + H2O. It participates in amino-acid biosynthesis; L-histidine biosynthesis; L-histidine from 5-phospho-alpha-D-ribose 1-diphosphate: step 6/9. The polypeptide is Imidazoleglycerol-phosphate dehydratase (Chlorobium phaeobacteroides (strain DSM 266 / SMG 266 / 2430)).